The chain runs to 343 residues: N-acetyl-gamma-glutamyl-phosphate reductase (343 aa).

C147 is a catalytic residue.

Belongs to the NAGSA dehydrogenase family. Type 1 subfamily.

Its subcellular location is the cytoplasm. The enzyme catalyses N-acetyl-L-glutamate 5-semialdehyde + phosphate + NADP(+) = N-acetyl-L-glutamyl 5-phosphate + NADPH + H(+). It participates in amino-acid biosynthesis; L-arginine biosynthesis; N(2)-acetyl-L-ornithine from L-glutamate: step 3/4. Catalyzes the NADPH-dependent reduction of N-acetyl-5-glutamyl phosphate to yield N-acetyl-L-glutamate 5-semialdehyde. The protein is N-acetyl-gamma-glutamyl-phosphate reductase of Listeria monocytogenes serotype 4b (strain F2365).